Consider the following 87-residue polypeptide: Small ribosomal subunit protein uS15c (87 aa).

The protein belongs to the universal ribosomal protein uS15 family. In terms of assembly, part of the 30S ribosomal subunit.

The protein localises to the plastid. Its subcellular location is the chloroplast. This Oenothera glazioviana (Large-flowered evening primrose) protein is Small ribosomal subunit protein uS15c (rps15).